The following is a 474-amino-acid chain: PTS system N-acetylmuramic acid-specific EIIBC component (474 aa).

A PTS EIIB type-1 domain is found at 1-89 (MAKEISSELL…SELLGEAPVQ (89 aa)). Topologically, residues 1–123 (MAKEISSELL…LAKFATIFTP (123 aa)) are cytoplasmic. Residue Cys-29 is the Phosphocysteine intermediate; for EIIB activity of the active site. The PTS EIIC type-1 domain occupies 115–474 (AKFATIFTPL…LFGCRNVNLD (360 aa)). The helical transmembrane segment at 124-144 (LIPGFIAAGLLLGIATLIATV) threads the bilayer. The Periplasmic segment spans residues 145–157 (MHVPADAQGTLPD). A helical membrane pass occupies residues 158-178 (ALNFMKVFSKGLFTFLVILVG). The Cytoplasmic segment spans residues 179–180 (YN). Residues 181-201 (AAQAFGGTGVNGAIIAALFLL) form a helical membrane-spanning segment. Residues 202-217 (GYNPAATTGYYAGFHD) lie on the Periplasmic side of the membrane. Residues 218–238 (FFGLPIDPRGNIIGVLIAAWA) form a helical membrane-spanning segment. The Cytoplasmic segment spans residues 239–260 (CARIEGMVRRFMPDDLDMLLTS). Residues 261–281 (LITLLITATLAYLIIMPLGGW) traverse the membrane as a helical segment. Over 282 to 301 (LFEGMSWLFMHLNSNPLGCA) the chain is Periplasmic. Residues 302–322 (VLAGLFLIAVVFGVHQGFIPV) form a helical membrane-spanning segment. At 323–334 (YLALMDSQGFNS) the chain is on the cytoplasmic side. Residues 335–355 (LFPILSMAGAGQVGAALALYW) traverse the membrane as a helical segment. Residues 356–368 (RAQPHSALRSQVR) lie on the Periplasmic side of the membrane. A helical membrane pass occupies residues 369 to 389 (GAIIPGLLGVGEPLIYGVTLP). Topologically, residues 390-393 (RMKP) are cytoplasmic. Residues 394-414 (FITACLGGAAGGLFIGLIAWW) traverse the membrane as a helical segment. At 415 to 440 (GLPMGLNSAFGPSGLVALPLMTSAQG) the chain is on the periplasmic side. The helical transmembrane segment at 441-461 (ILPAMAVYAGGILVAWVCGFI) threads the bilayer. The Cytoplasmic segment spans residues 462 to 474 (FTTLFGCRNVNLD).

The protein localises to the cell inner membrane. The enzyme catalyses N-acetyl-beta-D-muramate(out) + N(pros)-phospho-L-histidyl-[protein] = N-acetyl-beta-D-muramate 6-phosphate(in) + L-histidyl-[protein]. Its function is as follows. The phosphoenolpyruvate-dependent sugar phosphotransferase system (sugar PTS), a major carbohydrate active transport system, catalyzes the phosphorylation of incoming sugar substrates concomitantly with their translocation across the cell membrane. This system is involved in N-acetylmuramic acid (MurNAc) transport, yielding cytoplasmic MurNAc-6-P. Is also able to take up anhydro-N-acetylmuramic acid (anhMurNAc), but cannot phosphorylate the carbon 6, probably because of the 1,6-anhydro ring. This chain is PTS system N-acetylmuramic acid-specific EIIBC component (murP), found in Escherichia coli O157:H7.